The following is a 707-amino-acid chain: Matrix metalloproteinase-9 (707 aa).

A signal peptide spans 1–19 (MSLWQPLVLVLLVLGCCFA). The propeptide at 20-93 (APRQRQSTLV…GELDSATLKA (74 aa)) is activation peptide. N-linked (GlcNAc...) asparagine glycosylation is present at Asn-38. Residues 97–104 (PRCGVPDL) carry the Cysteine switch motif. Position 99 (Cys-99) interacts with Zn(2+). N-linked (GlcNAc...) asparagine glycans are attached at residues Asn-120 and Asn-127. Positions 131 and 165 each coordinate Ca(2+). 2 residues coordinate Zn(2+): His-175 and Asp-177. Ca(2+)-binding residues include Asp-182, Gly-183, Asp-185, and Leu-187. Residue His-190 coordinates Zn(2+). Gly-197, Gln-199, and Asp-201 together coordinate Ca(2+). Position 203 (His-203) interacts with Zn(2+). Asp-205, Asp-206, and Glu-208 together coordinate Ca(2+). Fibronectin type-II domains lie at 225 to 273 (ADGA…FCPS), 283 to 331 (ADGK…FCPT), and 342 to 390 (SAGE…FCPD). 6 cysteine pairs are disulfide-bonded: Cys-230/Cys-256, Cys-244/Cys-271, Cys-288/Cys-314, Cys-302/Cys-329, Cys-347/Cys-373, and Cys-361/Cys-388. His-401 contributes to the Zn(2+) binding site. Residue Glu-402 is part of the active site. 2 residues coordinate Zn(2+): His-405 and His-411. The disordered stretch occupies residues 431 to 508 (LHKDDVNGIR…AGPSTATTVP (78 aa)). Pro residues-rich tracts occupy residues 452–475 (RPPTTTTPQPTAPPTVCPTGPPTV) and 486–499 (TGPPSAGPTGPPTA). Cys-516 and Cys-704 are joined by a disulfide. Hemopexin repeat units lie at residues 518–563 (VNIF…WPAL), 564–608 (PRKL…GLGA), 610–657 (VAQV…FPGV), and 658–704 (PLDT…ILQC).

The protein belongs to the peptidase M10A family. As to quaternary structure, exists as monomer or homodimer; disulfide-linked. Also exists as heterodimer with LCN2. Macrophages and transformed cell lines produce only the monomeric form. Interacts with ECM1. (Microbial infection) Interacts with Staphylococcus aureus protein SSL5; this interaction inhibits MMP9 activity. It depends on Zn(2+) as a cofactor. Ca(2+) is required as a cofactor. In terms of processing, processing of the precursor yields different active forms of 64, 67 and 82 kDa. Sequentially processing by MMP3 yields the 82 kDa matrix metalloproteinase-9. Post-translationally, N- and O-glycosylated. Detected in neutrophils (at protein level). Produced by normal alveolar macrophages and granulocytes.

It is found in the secreted. The protein resides in the extracellular space. It localises to the extracellular matrix. It carries out the reaction Cleavage of gelatin types I and V and collagen types IV and V.. With respect to regulation, inhibited by histatin-3 1/24 (histatin-5). Inhibited by ECM1. Its function is as follows. Matrix metalloproteinase that plays an essential role in local proteolysis of the extracellular matrix and in leukocyte migration. Could play a role in bone osteoclastic resorption. Cleaves KiSS1 at a Gly-|-Leu bond. Cleaves NINJ1 to generate the Secreted ninjurin-1 form. Cleaves type IV and type V collagen into large C-terminal three quarter fragments and shorter N-terminal one quarter fragments. Degrades fibronectin but not laminin or Pz-peptide. This chain is Matrix metalloproteinase-9 (MMP9), found in Homo sapiens (Human).